A 196-amino-acid chain; its full sequence is 3-isopropylmalate dehydratase small subunit (196 aa).

It belongs to the LeuD family. LeuD type 1 subfamily. As to quaternary structure, heterodimer of LeuC and LeuD.

The catalysed reaction is (2R,3S)-3-isopropylmalate = (2S)-2-isopropylmalate. Its pathway is amino-acid biosynthesis; L-leucine biosynthesis; L-leucine from 3-methyl-2-oxobutanoate: step 2/4. Its function is as follows. Catalyzes the isomerization between 2-isopropylmalate and 3-isopropylmalate, via the formation of 2-isopropylmaleate. This Corynebacterium efficiens (strain DSM 44549 / YS-314 / AJ 12310 / JCM 11189 / NBRC 100395) protein is 3-isopropylmalate dehydratase small subunit.